The following is a 1088-amino-acid chain: RNA-directed RNA polymerase (1088 aa).

One can recognise a RdRp catalytic domain in the interval 501-687; sequence LSYGDVTRFL…AKRYIAGGKI (187 aa).

The protein belongs to the reoviridae RNA-directed RNA polymerase family. Interacts with VP3 (Potential). Interacts with VP2; this interaction activates VP1. Interacts with NSP5; this interaction is probably necessary for the formation of functional virus factories. Interacts with NSP2; this interaction is weak. Requires Mg(2+) as cofactor.

The protein resides in the virion. The enzyme catalyses RNA(n) + a ribonucleoside 5'-triphosphate = RNA(n+1) + diphosphate. Its function is as follows. RNA-directed RNA polymerase that is involved in both transcription and genome replication. Together with VP3 capping enzyme, forms an enzyme complex positioned near the channels situated at each of the five-fold vertices of the core. Following infection, the outermost layer of the virus is lost, leaving a double-layered particle (DLP) made up of the core and VP6 shell. VP1 then catalyzes the transcription of fully conservative plus-strand genomic RNAs that are extruded through the DLP's channels into the cytoplasm where they function as mRNAs for translation of viral proteins. One copy of each of the viral (+)RNAs is also recruited during core assembly, together with newly synthesized polymerase complexes and VP2. The polymerase of these novo-formed particles catalyzes the synthesis of complementary minus-strands leading to dsRNA formation. To do so, the polymerase specifically recognizes and binds 4 bases 5'-UGUG-3' in the conserved 3'-sequence of plus-strand RNA templates. VP2 presumably activates the autoinhibited VP1-RNA complex to coordinate packaging and genome replication. Once dsRNA synthesis is complete, the polymerase switches to the transcriptional mode, thus providing secondary transcription. In Bos taurus (Bovine), this protein is RNA-directed RNA polymerase.